Consider the following 229-residue polypeptide: Octanoyltransferase (229 aa).

One can recognise a BPL/LPL catalytic domain in the interval 45 to 220 (ATAVDELWVV…ELARQFCFVL (176 aa)). Substrate contacts are provided by residues 84–91 (RGGQVTYH), 151–153 (ALG), and 164–166 (GVA). Cys182 functions as the Acyl-thioester intermediate in the catalytic mechanism.

The protein belongs to the LipB family.

It localises to the cytoplasm. The catalysed reaction is octanoyl-[ACP] + L-lysyl-[protein] = N(6)-octanoyl-L-lysyl-[protein] + holo-[ACP] + H(+). Its pathway is protein modification; protein lipoylation via endogenous pathway; protein N(6)-(lipoyl)lysine from octanoyl-[acyl-carrier-protein]: step 1/2. Catalyzes the transfer of endogenously produced octanoic acid from octanoyl-acyl-carrier-protein onto the lipoyl domains of lipoate-dependent enzymes. Lipoyl-ACP can also act as a substrate although octanoyl-ACP is likely to be the physiological substrate. The chain is Octanoyltransferase from Xylella fastidiosa (strain 9a5c).